The following is a 164-amino-acid chain: S-ribosylhomocysteine lyase (164 aa).

Fe cation contacts are provided by histidine 54, histidine 58, and cysteine 128.

The protein belongs to the LuxS family. Homodimer. It depends on Fe cation as a cofactor.

It carries out the reaction S-(5-deoxy-D-ribos-5-yl)-L-homocysteine = (S)-4,5-dihydroxypentane-2,3-dione + L-homocysteine. Involved in the synthesis of autoinducer 2 (AI-2) which is secreted by bacteria and is used to communicate both the cell density and the metabolic potential of the environment. The regulation of gene expression in response to changes in cell density is called quorum sensing. Catalyzes the transformation of S-ribosylhomocysteine (RHC) to homocysteine (HC) and 4,5-dihydroxy-2,3-pentadione (DPD). The chain is S-ribosylhomocysteine lyase from Campylobacter jejuni subsp. jejuni serotype O:2 (strain ATCC 700819 / NCTC 11168).